Here is a 359-residue protein sequence, read N- to C-terminus: DNA polymerase IV (359 aa).

The 182-residue stretch at 7–188 (IIHIDMDAFY…LPIGKFFGVG (182 aa)) folds into the UmuC domain. The Mg(2+) site is built by Asp-11 and Asp-106. Glu-107 is an active-site residue.

This sequence belongs to the DNA polymerase type-Y family. As to quaternary structure, monomer. Mg(2+) is required as a cofactor.

The protein resides in the cytoplasm. It catalyses the reaction DNA(n) + a 2'-deoxyribonucleoside 5'-triphosphate = DNA(n+1) + diphosphate. Poorly processive, error-prone DNA polymerase involved in untargeted mutagenesis. Copies undamaged DNA at stalled replication forks, which arise in vivo from mismatched or misaligned primer ends. These misaligned primers can be extended by PolIV. Exhibits no 3'-5' exonuclease (proofreading) activity. May be involved in translesional synthesis, in conjunction with the beta clamp from PolIII. The chain is DNA polymerase IV from Clostridium perfringens (strain 13 / Type A).